A 660-amino-acid chain; its full sequence is tRNA 5-methylaminomethyl-2-thiouridine biosynthesis bifunctional protein MnmC (660 aa).

The tract at residues 1 to 235 (MTITRHARID…KWEVLRGTFI (235 aa)) is tRNA (mnm(5)s(2)U34)-methyltransferase. The FAD-dependent cmnm(5)s(2)U34 oxidoreductase stretch occupies residues 266 to 660 (IGAGLAGCAT…LRGLIRGGGK (395 aa)).

It in the N-terminal section; belongs to the methyltransferase superfamily. tRNA (mnm(5)s(2)U34)-methyltransferase family. This sequence in the C-terminal section; belongs to the DAO family. Requires FAD as cofactor.

The protein localises to the cytoplasm. The catalysed reaction is 5-aminomethyl-2-thiouridine(34) in tRNA + S-adenosyl-L-methionine = 5-methylaminomethyl-2-thiouridine(34) in tRNA + S-adenosyl-L-homocysteine + H(+). Functionally, catalyzes the last two steps in the biosynthesis of 5-methylaminomethyl-2-thiouridine (mnm(5)s(2)U) at the wobble position (U34) in tRNA. Catalyzes the FAD-dependent demodification of cmnm(5)s(2)U34 to nm(5)s(2)U34, followed by the transfer of a methyl group from S-adenosyl-L-methionine to nm(5)s(2)U34, to form mnm(5)s(2)U34. In Pseudomonas savastanoi pv. phaseolicola (strain 1448A / Race 6) (Pseudomonas syringae pv. phaseolicola (strain 1448A / Race 6)), this protein is tRNA 5-methylaminomethyl-2-thiouridine biosynthesis bifunctional protein MnmC.